The sequence spans 680 residues: Probable inactive DNA (cytosine-5)-methyltransferase DRM3 (680 aa).

The interval 1–24 (MVKVEDDVEGSGINASVGDLRDAA) is disordered. One can recognise a UBA 1 domain in the interval 45-86 (SSSSHVRSQFIGMGFSPMLVDRVLQKHGDRDSDTILEALLSQ). The tract at residues 91–113 (KSGSESGSLGDLFDSDNEENSSH) is disordered. Positions 194 to 235 (SLFGVMDKTLHLLQMGFTEEEVSSVIDKAGPEATVLELADTI) constitute a UBA 2 domain. The 328-residue stretch at 336-663 (IRRNVRSDVA…QRVKHIMGRL (328 aa)) folds into the SAM-dependent MTase DRM-type domain.

This sequence belongs to the class I-like SAM-binding methyltransferase superfamily. DRM-methyltransferase family.

It is found in the nucleus. Functionally, involved in de novo DNA methylation. Involved in RNA-directed DNA methylation (RdDM). This Oryza sativa subsp. japonica (Rice) protein is Probable inactive DNA (cytosine-5)-methyltransferase DRM3.